A 449-amino-acid polypeptide reads, in one-letter code: Doublesex- and mab-3-related transcription factor A2 (449 aa).

A DNA-binding region (DM) is located at residues 57–104 (CARCRNHGVVSALKGHKRYCRWKDCMCAKCTLIAERQRVMAAQVALRR). The interval 163-259 (FPKTQLSGST…PSPSSAASRH (97 aa)) is disordered. The segment covering 166–187 (TQLSGSTTTQKSVGKPASTESD) has biased composition (polar residues). A compositionally biased stretch (low complexity) spans 230–240 (GSVSSLGSDSG). The DMA domain occupies 260–295 (MNAIDILTRVFPSHKRSVLELVLQGCGKDVVQAIEQ).

The protein belongs to the DMRT family. As to expression, expressed in brain and eye.

It is found in the nucleus. Functionally, may be involved in sexual development. The protein is Doublesex- and mab-3-related transcription factor A2 (dmrta2) of Xiphophorus maculatus (Southern platyfish).